The sequence spans 427 residues: Mannosylglucosylglycerate synthase (427 aa).

This sequence belongs to the glycosyltransferase group 1 family. Co(2+) is required as a cofactor. Requires Mg(2+) as cofactor. It depends on Mn(2+) as a cofactor. The cofactor is Ni(2+).

The enzyme catalyses (2R)-2-O-(alpha-D-glucopyranosyl)-glycerate + GDP-alpha-D-mannose = (2R)-2-O-[alpha-D-mannopyranosyl-(1-&gt;2)-alpha-D-glucopyranosyl]-glycerate + GDP + H(+). Functionally, catalyzes the synthesis of mannosylglucosylglycerate (MGG) from glucosylglycerate (GG) and GDP-mannose. The chain is Mannosylglucosylglycerate synthase from Thermotoga maritima (strain ATCC 43589 / DSM 3109 / JCM 10099 / NBRC 100826 / MSB8).